We begin with the raw amino-acid sequence, 223 residues long: Ribosome maturation factor RimM (223 aa).

Residues 1–12 (MARRPGSSSRGP) are compositionally biased toward low complexity. Disordered stretches follow at residues 1-44 (MARR…DPGL) and 203-223 (VADP…DDPG). In terms of domain architecture, PRC barrel spans 135-210 (DEDEFFLTDL…KVVADPPDDL (76 aa)).

This sequence belongs to the RimM family. As to quaternary structure, binds ribosomal protein uS19.

Its subcellular location is the cytoplasm. Functionally, an accessory protein needed during the final step in the assembly of 30S ribosomal subunit, possibly for assembly of the head region. Essential for efficient processing of 16S rRNA. May be needed both before and after RbfA during the maturation of 16S rRNA. It has affinity for free ribosomal 30S subunits but not for 70S ribosomes. The chain is Ribosome maturation factor RimM from Methylorubrum extorquens (strain CM4 / NCIMB 13688) (Methylobacterium extorquens).